The following is a 732-amino-acid chain: Aldehyde oxidoreductase molybdenum-binding subunit PaoC (732 aa).

Residues 241–242 (GF), 468–470 (IGT), 511–512 (GA), 615–621 (RILNPKT), Gln625, and 688–691 (KGVG) contribute to the Mo-molybdopterin cytosine dinucleotide site. The active-site Proton acceptor is Glu692.

Belongs to the xanthine dehydrogenase family. As to quaternary structure, heterotrimer composed of PaoA, PaoB and PaoC. The cofactor is Mo-molybdopterin cytosine dinucleotide.

It localises to the periplasm. The catalysed reaction is an aldehyde + A + H2O = a carboxylate + AH2 + H(+). Its activity is regulated as follows. The complex requires PaoD for activity. Functionally, oxidizes aldehydes to the corresponding carboxylic acids with a preference for aromatic aldehydes. It might play a role in the detoxification of aldehydes to avoid cell damage. This Escherichia coli (strain K12) protein is Aldehyde oxidoreductase molybdenum-binding subunit PaoC.